A 264-amino-acid polypeptide reads, in one-letter code: 3-methyl-2-oxobutanoate hydroxymethyltransferase (264 aa).

Residues Asp-45 and Asp-84 each coordinate Mg(2+). Residues 45–46 (DS), Asp-84, and Lys-112 contribute to the 3-methyl-2-oxobutanoate site. Glu-114 serves as a coordination point for Mg(2+). Glu-181 (proton acceptor) is an active-site residue.

Belongs to the PanB family. In terms of assembly, homodecamer; pentamer of dimers. Requires Mg(2+) as cofactor.

The protein localises to the cytoplasm. The catalysed reaction is 3-methyl-2-oxobutanoate + (6R)-5,10-methylene-5,6,7,8-tetrahydrofolate + H2O = 2-dehydropantoate + (6S)-5,6,7,8-tetrahydrofolate. It participates in cofactor biosynthesis; (R)-pantothenate biosynthesis; (R)-pantoate from 3-methyl-2-oxobutanoate: step 1/2. In terms of biological role, catalyzes the reversible reaction in which hydroxymethyl group from 5,10-methylenetetrahydrofolate is transferred onto alpha-ketoisovalerate to form ketopantoate. In Vibrio atlanticus (strain LGP32) (Vibrio splendidus (strain Mel32)), this protein is 3-methyl-2-oxobutanoate hydroxymethyltransferase.